We begin with the raw amino-acid sequence, 132 residues long: Agouti-signaling protein (132 aa).

Residues 1–22 (MDVTRLLLATLLVFLCFFTAYS) form the signal peptide. An N-linked (GlcNAc...) asparagine glycan is attached at asparagine 39. Residues 61–87 (QISRKEAEKKRSSKKEASMKKVARPRT) form a disordered region. Over residues 63–79 (SRKEAEKKRSSKKEASM) the composition is skewed to basic and acidic residues. 5 disulfides stabilise this stretch: cysteine 93–cysteine 108, cysteine 100–cysteine 114, cysteine 107–cysteine 125, cysteine 111–cysteine 132, and cysteine 116–cysteine 123. An Agouti domain is found at 93-132 (CVTTRDSCKPPAPACCDPCASCQCRFFRSACSCRVLSLNC).

The protein resides in the secreted. In terms of biological role, involved in the regulation of melanogenesis. The binding of ASP to MC1R precludes alpha-MSH initiated signaling and thus blocks production of cAMP, leading to a down-regulation of eumelanogenesis (brown/black pigment) and thus increasing synthesis of pheomelanin (yellow/red pigment). The polypeptide is Agouti-signaling protein (ASIP) (Macaca silenus (Lion-tailed macaque)).